Here is a 499-residue protein sequence, read N- to C-terminus: Maturase K (499 aa).

It belongs to the intron maturase 2 family. MatK subfamily.

The protein resides in the plastid. It localises to the chloroplast. Functionally, usually encoded in the trnK tRNA gene intron. Probably assists in splicing its own and other chloroplast group II introns. This is Maturase K from Camellia sasanqua (Christmas camellia).